We begin with the raw amino-acid sequence, 352 residues long: C-C chemokine receptor type 5 (352 aa).

At 1–30 the chain is on the extracellular side; it reads MDYQVSSPTYDIDYYTSEPCQKINVKQIAA. The residue at position 3 (Y3) is a Sulfotyrosine. O-linked (GalNAc...) serine glycosylation is found at S6 and S7. Sulfotyrosine occurs at positions 10, 14, and 15. 2 cysteine pairs are disulfide-bonded: C20–C269 and C101–C178. Residues 31–58 form a helical membrane-spanning segment; it reads RLLPPLYSLVFIFGFVGNMLVILILINC. The Cytoplasmic segment spans residues 59 to 68; sequence KRLKSMTDIY. The helical transmembrane segment at 69–89 threads the bilayer; the sequence is LLNLAISDLFFLLTVPFWAHY. Residues 90–102 lie on the Extracellular side of the membrane; the sequence is AAAQWDFGNTMCQ. A helical membrane pass occupies residues 103–124; that stretch reads LLTGLYFIGFFSGIFFIILLTI. The Cytoplasmic segment spans residues 125-141; that stretch reads DRYLAIVHAVFALKART. A helical transmembrane segment spans residues 142–166; the sequence is VTFGVVTSVITWVVAVFASLPGIIF. Over 167 to 198 the chain is Extracellular; it reads TRSQKEGLHYTCSSHFPYSQYQFWKNFQTLKI. The chain crosses the membrane as a helical span at residues 199–218; sequence VILGLVLPLLVMVICYSGIL. The Cytoplasmic portion of the chain corresponds to 219-235; that stretch reads KTLLRCRNEKKRHRAVR. The chain crosses the membrane as a helical span at residues 236–260; it reads LIFTIMIVYFLFWAPYNIVLLLNTF. The Extracellular portion of the chain corresponds to 261 to 277; the sequence is QEFFGLNNCSSSNRLDQ. The helical transmembrane segment at 278 to 301 threads the bilayer; sequence AMQVTETLGMTHCCINPIIYAFVG. Residues 302–352 lie on the Cytoplasmic side of the membrane; the sequence is EKFRNYLLVFFQKHIAKRFCKCCSIFQQEAPERASSVYTRSTGEQEISVGL. S-palmitoyl cysteine attachment occurs at residues C321, C323, and C324. Residues S336, S337, S342, and S349 each carry the phosphoserine; by BARK1 modification.

Belongs to the G-protein coupled receptor 1 family. In terms of assembly, interacts with PRAF2. Efficient ligand binding to CCL3/MIP-1alpha and CCL4/MIP-1beta requires sulfation, O-glycosylation and sialic acid modifications. Glycosylation on Ser-6 is required for efficient binding of CCL4. Interacts with GRK2. Interacts with ARRB1 and ARRB2. Interacts with CNIH4. Interacts with S100A4; this interaction stimulates T-lymphocyte chemotaxis. Sulfated on at least 2 of the N-terminal tyrosines. Sulfation is required for efficient binding of the chemokines, CCL3 and CCL4. In terms of processing, palmitoylation in the C-terminal is important for cell surface expression. Post-translationally, phosphorylation on serine residues in the C-terminal is stimulated by binding CC chemokines especially by APO-RANTES. O-glycosylated, but not N-glycosylated. Ser-6 appears to be the major site even if Ser-7 may be also O-glycosylated. Also sialylated glycans present which contribute to chemokine binding. Thr-16 and Ser-17 may also be glycosylated and, if so, with small moieties such as a T-antigen.

The protein localises to the cell membrane. Functionally, receptor for a number of inflammatory CC-chemokines including CCL3/MIP-1-alpha, CCL4/MIP-1-beta and RANTES and subsequently transduces a signal by increasing the intracellular calcium ion level. May play a role in the control of granulocytic lineage proliferation or differentiation. Participates in T-lymphocyte migration to the infection site by acting as a chemotactic receptor. The protein is C-C chemokine receptor type 5 (CCR5) of Pongo abelii (Sumatran orangutan).